The chain runs to 809 residues: Trimethylamine-N-oxide reductase 2 (809 aa).

The tat-type signal signal peptide spans 1–31 (MTLTRREFIKHSGIAAGALVVTSAAPLPAWA). Mo-bis(molybdopterin guanine dinucleotide) is bound at residue serine 176.

Belongs to the prokaryotic molybdopterin-containing oxidoreductase family. Mo-bis(molybdopterin guanine dinucleotide) is required as a cofactor. In terms of processing, predicted to be exported by the Tat system. The position of the signal peptide cleavage has not been experimentally proven.

The protein resides in the periplasm. The catalysed reaction is trimethylamine + 2 Fe(III)-[cytochrome c] + H2O = trimethylamine N-oxide + 2 Fe(II)-[cytochrome c] + 3 H(+). In terms of biological role, reduces trimethylamine-N-oxide (TMAO) into trimethylamine; an anaerobic reaction coupled to energy-yielding reactions. Can also reduce other N- and S-oxide compounds such as 4-methylmorpholine-N-oxide and biotin sulfoxide (BSO), but with a lower catalytic efficiency. In Escherichia coli O157:H7, this protein is Trimethylamine-N-oxide reductase 2 (torZ).